A 241-amino-acid polypeptide reads, in one-letter code: Anti-Pycsar protein Apyc1 (241 aa).

Residues 17–215 (DNNNALLEQD…SVQKKTWLMH (199 aa)) are beta-lactamase-like. Residues His-59, His-61, Asp-63, His-64, His-142, Asp-162, and His-215 each coordinate Zn(2+).

The protein belongs to the nuclease anti-Pycsar protein Apyc1 family. Homodimer. Requires Zn(2+) as cofactor.

The enzyme catalyses 3',5'-cyclic CMP + H2O = CMP + H(+). It catalyses the reaction 3',5'-cyclic UMP + H2O = UMP + H(+). Counteracts the endogenous Pycsar antiviral defense system. Phosphodiesterase that enables metal-dependent hydrolysis of host cyclic nucleotide Pycsar defense signals such as cCMP and cUMP. This is Anti-Pycsar protein Apyc1 from Paenibacillus harenae.